Consider the following 60-residue polypeptide: Large ribosomal subunit protein uL30 (60 aa).

It belongs to the universal ribosomal protein uL30 family. In terms of assembly, part of the 50S ribosomal subunit.

The chain is Large ribosomal subunit protein uL30 from Acidovorax ebreus (strain TPSY) (Diaphorobacter sp. (strain TPSY)).